The chain runs to 178 residues: Ribosome maturation factor RimM (178 aa).

In terms of domain architecture, PRC barrel spans 104–177; it reads SDEYYFYEVI…KIVVKLPEWL (74 aa).

Belongs to the RimM family. In terms of assembly, binds ribosomal protein uS19.

The protein resides in the cytoplasm. In terms of biological role, an accessory protein needed during the final step in the assembly of 30S ribosomal subunit, possibly for assembly of the head region. Essential for efficient processing of 16S rRNA. May be needed both before and after RbfA during the maturation of 16S rRNA. It has affinity for free ribosomal 30S subunits but not for 70S ribosomes. In Thermosipho melanesiensis (strain DSM 12029 / CIP 104789 / BI429), this protein is Ribosome maturation factor RimM.